The following is a 226-amino-acid chain: PKHD-type hydroxylase mma_3620 (226 aa).

Residues 78 to 178 (RYMPPLFNRY…RVCSFFWLQS (101 aa)) enclose the Fe2OG dioxygenase domain. The Fe cation site is built by His96, Asp98, and His159. Position 169 (Arg169) interacts with 2-oxoglutarate.

Requires Fe(2+) as cofactor. It depends on L-ascorbate as a cofactor.

The sequence is that of PKHD-type hydroxylase mma_3620 from Janthinobacterium sp. (strain Marseille) (Minibacterium massiliensis).